Consider the following 694-residue polypeptide: MESKRLDNAALAAGISPNYINAHGKPQSISAETKRRLLDAMHQRTATKVAVTPVPNVMVYTSGKKMPMVVEGSGEYSWLLTTEEGTQYKGHVTGGKAFNLPTKLPEGYHTLTLTQDDQRAHCRVIVAPKRCYEPQALLNKQKLWGACVQLYTLRSEKNWGIGDFGDLKAMLVDVAKRGGSFIGLNPIHALYPANPESASPYSPSSRRWLNVIYIDVNAVEDFHLSEEAQAWWQLPTTQQTLQQARDADWVDYSTVTALKMTALRMAWKGFAQRDDEQMAAFRQFVAEQGDSLFWQAAFDALHAQQVKEDEMRWGWPAWPEMYQNVDSPEVRQFCEEHRDDVDFYLWLQWLAYSQFAACWEISQGYEMPIGLYRDLAVGVAEGGAETWCDRELYCLKASVGAPPDILGPLGQNWGLPPMDPHIITARAYEPFIELLRANMQNCGALRIDHVMSMLRLWWIPYGETADQGAYVHYPVDDLLSILALESKRHRCMVIGEDLGTVPVEIVGKLRSSGVYSYKVLYFENDHEKTFRAPKAYPEQSMAVAATHDLPTLRGYWECGDLTLGKTLGLYPDEVVLRGLYQDRELAKQGLLDALHKYGCLPKRAGHKASLMSMTPTLNRGLQRYIADSNSALLGLQPEDWLDMAEPVNIPGTSYQYKNWRRKLSATLESMFADDGVNKLLKDLDRRRRAAAKKK.

This sequence belongs to the disproportionating enzyme family.

It localises to the cytoplasm. It carries out the reaction Transfers a segment of a (1-&gt;4)-alpha-D-glucan to a new position in an acceptor, which may be glucose or a (1-&gt;4)-alpha-D-glucan.. The protein is 4-alpha-glucanotransferase (malQ) of Escherichia coli (strain K12).